Consider the following 704-residue polypeptide: Inhibitor of carbonic anhydrase (704 aa).

The signal sequence occupies residues M1 to A19. 2 consecutive Transferrin-like domains span residues V25–R347 and V357–Q689. 16 cysteine pairs are disulfide-bonded: C28–C67, C38–C58, C137–C213, C172–C188, C175–C196, C185–C198, C246–C260, C360–C392, C370–C383, C417–C699, C440–C662, C472–C549, C496–C690, C506–C520, C517–C532, and C589–C603. An N-linked (GlcNAc...) asparagine glycan is attached at N491.

The protein belongs to the transferrin family. As to quaternary structure, monomer. Interacts (via transferrin-like domain 2) with CA2. In terms of processing, N-glycosylated. As to expression, blood plasma (at protein level).

It localises to the secreted. In terms of biological role, inhibitor for carbonic anhydrase 2 (CA2). Does not bind iron ions. The polypeptide is Inhibitor of carbonic anhydrase (Sus scrofa (Pig)).